The primary structure comprises 549 residues: Chaperonin GroEL (549 aa).

ATP is bound by residues 29–32 (TLGP), lysine 50, 86–90 (DGTTT), glycine 414, 477–479 (NAA), and aspartate 493.

It belongs to the chaperonin (HSP60) family. In terms of assembly, forms a cylinder of 14 subunits composed of two heptameric rings stacked back-to-back. Interacts with the co-chaperonin GroES.

It localises to the cytoplasm. The catalysed reaction is ATP + H2O + a folded polypeptide = ADP + phosphate + an unfolded polypeptide.. In terms of biological role, together with its co-chaperonin GroES, plays an essential role in assisting protein folding. The GroEL-GroES system forms a nano-cage that allows encapsulation of the non-native substrate proteins and provides a physical environment optimized to promote and accelerate protein folding. This is Chaperonin GroEL from Geotalea uraniireducens (strain Rf4) (Geobacter uraniireducens).